Here is a 661-residue protein sequence, read N- to C-terminus: NUAK family SNF1-like kinase 1 (661 aa).

N-acetylmethionine is present on Met1. A disordered region spans residues 1-24; that stretch reads MEGAAAPVAGDRPDLGLGAPGSPR. At Ser22 the chain carries Phosphoserine. The region spanning 55–306 is the Protein kinase domain; that stretch reads YELQETLGKG…IEDIANHWWV (252 aa). ATP-binding positions include 61–69 and Lys84; that span reads LGKGTYGKV. The active-site Proton acceptor is the Asp178. Residue Thr211 is modified to Phosphothreonine; by LKB1. 2 disordered regions span residues 345–421 and 442–570; these read TEAK…EGVV and LPSS…RPSS. Basic residues predominate over residues 393–404; sequence SSKRPKGILKKR. The short motif at 399-402 is the GILK motif element; that stretch reads GILK. Ser455 bears the Phosphoserine mark. Positions 518 to 529 are enriched in basic residues; sequence SCRRKGILKHSS. Phosphoserine; by PKB/AKT1 is present on Ser600.

The protein belongs to the protein kinase superfamily. CAMK Ser/Thr protein kinase family. SNF1 subfamily. Interacts (via GILK motif) with PPP1CB; the interaction is direct and bridges NUAK1 and PPP1R12A. Interacts with CDKN1A. Requires Mg(2+) as cofactor. Post-translationally, ubiquitinated with 'Lys-29'- and 'Lys-33'-linked polyubiquitins which appear to impede LKB1-mediated phosphorylation. Deubiquitinated by USP9X. Phosphorylated at Thr-211 by STK11/LKB1 in complex with STE20-related adapter-alpha (STRADA) pseudo kinase and CAB39. Not dephosphorylated by the myosin PP1 complex when regulating its activity, due to the presence of PPP1R12A, which prevents myosin PP1 from dephosphorylating NUAK1. Phosphorylated by STK38L upon stimulation with IGF1. As to expression, expressed at high levels in heart and brain, and at lower levels in skeletal muscle, kidney, ovary, placenta, lung and liver. Highly up-regulated in colorectal cancer cell lines.

It is found in the nucleus. It localises to the cytoplasm. It carries out the reaction L-seryl-[protein] + ATP = O-phospho-L-seryl-[protein] + ADP + H(+). The catalysed reaction is L-threonyl-[protein] + ATP = O-phospho-L-threonyl-[protein] + ADP + H(+). Activated by phosphorylation on Thr-211. Activated by phosphorylation at Ser-600 AKT1 during glucose starvation; the relevance of such activation in normal cells is however unsure. Its function is as follows. Serine/threonine-protein kinase involved in various processes such as cell adhesion, regulation of cell ploidy and senescence, cell proliferation and tumor progression. Phosphorylates ATM, CASP6, LATS1, PPP1R12A and p53/TP53. Acts as a regulator of cellular senescence and cellular ploidy by mediating phosphorylation of 'Ser-464' of LATS1, thereby controlling its stability. Controls cell adhesion by regulating activity of the myosin protein phosphatase 1 (PP1) complex. Acts by mediating phosphorylation of PPP1R12A subunit of myosin PP1: phosphorylated PPP1R12A then interacts with 14-3-3, leading to reduced dephosphorylation of myosin MLC2 by myosin PP1. May be involved in DNA damage response: phosphorylates p53/TP53 at 'Ser-15' and 'Ser-392' and is recruited to the CDKN1A/WAF1 promoter to participate in transcription activation by p53/TP53. May also act as a tumor malignancy-associated factor by promoting tumor invasion and metastasis under regulation and phosphorylation by AKT1. Suppresses Fas-induced apoptosis by mediating phosphorylation of CASP6, thereby suppressing the activation of the caspase and the subsequent cleavage of CFLAR. Regulates UV radiation-induced DNA damage response mediated by CDKN1A. In association with STK11, phosphorylates CDKN1A in response to UV radiation and contributes to its degradation which is necessary for optimal DNA repair. The protein is NUAK family SNF1-like kinase 1 (NUAK1) of Homo sapiens (Human).